Reading from the N-terminus, the 393-residue chain is MILVINSGSSSIKFKLFDTSKTIEPILDGLAERIGIDGFLKFEHNNQKYKFEDPLPDHEHAIQLILNKLLELKIISNIDEINGVGFRVVHGGEISHSSIITDEILSKIQDSVKLAPLHNPAAIIAIKAVKKLMPNTSMVACFDTAFHQTMPEVNYLYTVPYKWYEEFGVRKYGFHGISYEYIVNKSSEILNKKKENLNLIVCHLGNGASISCIKDGKSYDTSMGLTPLAGLMMGTRSGDIDVSICEYIAKQTNTDIFSITQTLNKQSGLLGLSQVSADMRDVLEQYDRNDKKAVVAVEKYVQIVADFIVKYANYLDNIDAVVFTAGIGENADVIRDLICKKVKLLNLQIDQDKNQAKYSDYKLISSEKSKIPVYAIRTNEEKMICLDTLNLIK.

Residue N6 coordinates Mg(2+). K13 serves as a coordination point for ATP. R87 is a binding site for substrate. D143 acts as the Proton donor/acceptor in catalysis. ATP is bound by residues 203–207 (HLGNG), 278–280 (DMR), and 326–330 (GIGEN). E380 is a Mg(2+) binding site.

It belongs to the acetokinase family. As to quaternary structure, homodimer. Requires Mg(2+) as cofactor. The cofactor is Mn(2+).

It is found in the cytoplasm. The enzyme catalyses acetate + ATP = acetyl phosphate + ADP. It functions in the pathway metabolic intermediate biosynthesis; acetyl-CoA biosynthesis; acetyl-CoA from acetate: step 1/2. Functionally, catalyzes the formation of acetyl phosphate from acetate and ATP. Can also catalyze the reverse reaction. This is Acetate kinase from Mycoplasma mycoides subsp. mycoides SC (strain CCUG 32753 / NCTC 10114 / PG1).